The primary structure comprises 298 residues: Putative S-adenosyl-L-methionine-dependent methyltransferase MAV_0778 (298 aa).

S-adenosyl-L-methionine contacts are provided by residues Asp124 and 153–154; that span reads DL.

The protein belongs to the UPF0677 family.

Its function is as follows. Exhibits S-adenosyl-L-methionine-dependent methyltransferase activity. The chain is Putative S-adenosyl-L-methionine-dependent methyltransferase MAV_0778 from Mycobacterium avium (strain 104).